The primary structure comprises 220 residues: Glutathione S-transferase U23 (220 aa).

Positions 3–82 (EEIILLDYWA…YIDELWPDTN (80 aa)) constitute a GST N-terminal domain. Glutathione-binding positions include 13–14 (SM), 39–40 (NK), 53–54 (KI), and 66–67 (ES). Residues 88-208 (DPYQRAQARF…LPDSDKVLKS (121 aa)) enclose the GST C-terminal domain.

Belongs to the GST superfamily. Tau family.

The protein resides in the cytoplasm. It localises to the cytosol. The catalysed reaction is RX + glutathione = an S-substituted glutathione + a halide anion + H(+). May be involved in the conjugation of reduced glutathione to a wide number of exogenous and endogenous hydrophobic electrophiles and have a detoxification role against certain herbicides. The sequence is that of Glutathione S-transferase U23 (GSTU23) from Arabidopsis thaliana (Mouse-ear cress).